A 200-amino-acid polypeptide reads, in one-letter code: Probable GTP-binding protein EngB (200 aa).

Positions 22–194 (TLPEVAFVGR…WKEVLRLTLA (173 aa)) constitute an EngB-type G domain. GTP is bound by residues 30-37 (GRSNVGKS), 57-61 (GRTQL), 75-78 (DLPG), 142-145 (TKCD), and 173-175 (FSA). Mg(2+)-binding residues include Ser-37 and Thr-59.

This sequence belongs to the TRAFAC class TrmE-Era-EngA-EngB-Septin-like GTPase superfamily. EngB GTPase family. Mg(2+) is required as a cofactor.

Its function is as follows. Necessary for normal cell division and for the maintenance of normal septation. The chain is Probable GTP-binding protein EngB from Pelobacter propionicus (strain DSM 2379 / NBRC 103807 / OttBd1).